Here is a 246-residue protein sequence, read N- to C-terminus: Alpha-tubulin N-acetyltransferase (246 aa).

The region spanning leucine 21–phenylalanine 202 is the N-acetyltransferase domain. Acetyl-CoA is bound by residues phenylalanine 135 to lysine 148 and serine 172 to lysine 181.

The protein belongs to the acetyltransferase ATAT1 family.

The enzyme catalyses L-lysyl-[alpha-tubulin] + acetyl-CoA = N(6)-acetyl-L-lysyl-[alpha-tubulin] + CoA + H(+). Specifically acetylates 'Lys-40' in alpha-tubulin on the lumenal side of microtubules. Promotes microtubule destabilization and accelerates microtubule dynamics; this activity may be independent of acetylation activity. Acetylates alpha-tubulin with a slow enzymatic rate, due to a catalytic site that is not optimized for acetyl transfer. Enters the microtubule through each end and diffuses quickly throughout the lumen of microtubules. Acetylates only long/old microtubules because of its slow acetylation rate since it does not have time to act on dynamically unstable microtubules before the enzyme is released. The polypeptide is Alpha-tubulin N-acetyltransferase (Leishmania major).